We begin with the raw amino-acid sequence, 162 residues long: Urease accessory protein UreE 1 (162 aa).

Residues 143 to 162 (SGGHQHHHGHDHDHHHPDHE) form a disordered region. Basic and acidic residues predominate over residues 152 to 162 (HDHDHHHPDHE).

Belongs to the UreE family.

Its subcellular location is the cytoplasm. Its function is as follows. Involved in urease metallocenter assembly. Binds nickel. Probably functions as a nickel donor during metallocenter assembly. This is Urease accessory protein UreE 1 from Brucella suis biovar 1 (strain 1330).